Reading from the N-terminus, the 564-residue chain is Hexose transporter HXT17 (564 aa).

The segment covering 1–12 (MQSSTESDRDIQ) has biased composition (basic and acidic residues). Positions 1 to 22 (MQSSTESDRDIQDGPDADIHVA) are disordered. The Cytoplasmic segment spans residues 1 to 52 (MQSSTESDRDIQDGPDADIHVAPPVEKEWSDGFDDNEVINGDNVEPPKRGLI). The chain crosses the membrane as a helical span at residues 53 to 73 (GYLVIYLLCYPISFGGFLPGW). Topologically, residues 74-109 (DSGITAGFINMDNFKMNFGSYKHSTGEYYLSNVRMG) are extracellular. Residues 110–130 (LLVAMFSIGCAIGGLIFARLA) traverse the membrane as a helical segment. Topologically, residues 131-136 (DTLGRR) are cytoplasmic. The chain crosses the membrane as a helical span at residues 137 to 157 (LAIVIVVLVYMVGAIIQISSN). Topologically, residues 158-167 (HKWYQYFVGK) are extracellular. Residues 168 to 188 (IIYGLGAGGCSVLCPMLLSEI) traverse the membrane as a helical segment. The Cytoplasmic segment spans residues 189–194 (APTDLR). The chain crosses the membrane as a helical span at residues 195-215 (GGLVSLYQLNMTFGIFLGYCS). Topologically, residues 216–229 (VYGTRKYDNTAQWR) are extracellular. Residues 230 to 250 (VPLGLCFLWTLIIIIGMLLVP) form a helical membrane-spanning segment. Residues 251-333 (ESPRYLIECE…VQTFLQLTGE (83 aa)) lie on the Cytoplasmic side of the membrane. A helical membrane pass occupies residues 334–350 (NYFFFYGTTIFKSVGLT). Over 351–356 (DGFETS) the chain is Extracellular. The helical transmembrane segment at 357 to 374 (IVLGTVNFFSTIIAVMVV) threads the bilayer. Topologically, residues 375–381 (DKIGRRK) are cytoplasmic. A helical membrane pass occupies residues 382–402 (CLLFGAAGMMACMVIFASIGV). Residues 403 to 424 (KCLYPHGQDGPSSKGAGNAMIV) lie on the Extracellular side of the membrane. Residues 425–445 (FTCFYIFCFATTWAPVAYIVV) traverse the membrane as a helical segment. The Cytoplasmic segment spans residues 446–462 (AESFPSKVKSRAMSIST). A helical membrane pass occupies residues 463 to 483 (ACNWLWQFLIGFFTPFITGSI). A topological domain (extracellular) is located at residue His-484. Residues 485-505 (FYYGYVFVGCLVAMFLYVFFF) form a helical membrane-spanning segment. Residues 506 to 564 (LPETIGLSLEEIQLLYEEGIKPWKSASWVPPSRRGIPSEESKTEKKDWKKFLKFSKGSD) are Cytoplasmic-facing.

Belongs to the major facilitator superfamily. Sugar transporter (TC 2.A.1.1) family.

Its subcellular location is the membrane. In terms of biological role, probable glucose transporter. The chain is Hexose transporter HXT17 (HXT17) from Saccharomyces cerevisiae (strain ATCC 204508 / S288c) (Baker's yeast).